We begin with the raw amino-acid sequence, 349 residues long: Quinone oxidoreductase-like protein 2 (349 aa).

At Lys35 the chain carries N6-acetyllysine. An N6-succinyllysine modification is found at Lys200.

The protein belongs to the zinc-containing alcohol dehydrogenase family. Quinone oxidoreductase subfamily.

The protein is Quinone oxidoreductase-like protein 2 of Bos taurus (Bovine).